The sequence spans 358 residues: Beta-lactamase (358 aa).

The Acyl-ester intermediate role is filled by S60. Y146 functions as the Proton acceptor in the catalytic mechanism. 311-313 (KTG) is a binding site for substrate.

This sequence belongs to the class-C beta-lactamase family.

Its subcellular location is the periplasm. The catalysed reaction is a beta-lactam + H2O = a substituted beta-amino acid. Its function is as follows. This protein is a serine beta-lactamase with a substrate specificity for cephalosporins. This chain is Beta-lactamase, found in Pseudomonas fluorescens.